We begin with the raw amino-acid sequence, 223 residues long: MADLVPVLTIDGPSGVGKGTVSKIVAARLGWHYLDSGALYRAVAVAADWTAVDVSDTTALVKCAFDTCVNFAKCADGEMRVLVNAIDATDVLRMETTGVLASTIAAISEVRAALKERQQMFRRTPGLVADGRDMGTVIFPDAQYKVFLTAKAEERAQRRYKQLMKKGVSVMLGALLEEIRARDARDACRSVAPLKPADDALLIDSTCMEVDEVVAQVLALVTD.

ATP is bound at residue 12-20 (GPSGVGKGT).

Belongs to the cytidylate kinase family. Type 1 subfamily.

The protein localises to the cytoplasm. The catalysed reaction is CMP + ATP = CDP + ADP. It catalyses the reaction dCMP + ATP = dCDP + ADP. The chain is Cytidylate kinase from Xylella fastidiosa (strain 9a5c).